The following is a 428-amino-acid chain: Trigger factor (428 aa).

Positions 163 to 248 (GDTAVIDFEG…VHEVKAKQLP (86 aa)) constitute a PPIase FKBP-type domain.

The protein belongs to the FKBP-type PPIase family. Tig subfamily.

It localises to the cytoplasm. It catalyses the reaction [protein]-peptidylproline (omega=180) = [protein]-peptidylproline (omega=0). In terms of biological role, involved in protein export. Acts as a chaperone by maintaining the newly synthesized protein in an open conformation. Functions as a peptidyl-prolyl cis-trans isomerase. In Geobacillus thermodenitrificans (strain NG80-2), this protein is Trigger factor.